Here is a 402-residue protein sequence, read N- to C-terminus: Deoxyguanosinetriphosphate triphosphohydrolase-like protein (402 aa).

The interval 20-39 (PAFSRGRLVPEPESPTRTPF) is disordered. The HD domain maps to 73–217 (RLTHTIEVAQ…AAIADDIAYN (145 aa)).

It belongs to the dGTPase family. Type 2 subfamily.

This Brucella canis (strain ATCC 23365 / NCTC 10854 / RM-666) protein is Deoxyguanosinetriphosphate triphosphohydrolase-like protein.